Reading from the N-terminus, the 93-residue chain is Integration host factor subunit beta (93 aa).

It belongs to the bacterial histone-like protein family. Heterodimer of an alpha and a beta chain.

This protein is one of the two subunits of integration host factor, a specific DNA-binding protein that functions in genetic recombination as well as in transcriptional and translational control. This is Integration host factor subunit beta from Idiomarina loihiensis (strain ATCC BAA-735 / DSM 15497 / L2-TR).